Reading from the N-terminus, the 983-residue chain is Protein translocase subunit SecA (983 aa).

ATP is bound by residues Gln83, Gly101–Thr105, and Asp489. A disordered region spans residues Ile948–Glu983. Over residues Glu973–Glu983 the composition is skewed to polar residues.

Belongs to the SecA family. As to quaternary structure, monomer and homodimer. Part of the essential Sec protein translocation apparatus which comprises SecA, SecYEG and auxiliary proteins SecDF. Other proteins may also be involved.

Its subcellular location is the cell membrane. The protein resides in the cytoplasm. The enzyme catalyses ATP + H2O + cellular proteinSide 1 = ADP + phosphate + cellular proteinSide 2.. In terms of biological role, part of the Sec protein translocase complex. Interacts with the SecYEG preprotein conducting channel. Has a central role in coupling the hydrolysis of ATP to the transfer of proteins into and across the cell membrane, serving as an ATP-driven molecular motor driving the stepwise translocation of polypeptide chains across the membrane. The protein is Protein translocase subunit SecA of Mesomycoplasma hyopneumoniae (strain 7448) (Mycoplasma hyopneumoniae).